Consider the following 2961-residue polypeptide: Zinc finger ZZ-type and EF-hand domain-containing protein 1 (2961 aa).

The segment at 1 to 41 (MGNAPSHSSEDEAAAAGGEGWGPHQDWAAVSGTTPGPGVAA) is disordered. A lipid anchor (N-myristoyl glycine) is attached at Gly-2. Positions 111–146 (CSSEQFEEAFAQFDAEGDGTVDAENMLEALKNSSGA) constitute an EF-hand domain. In terms of domain architecture, DOC spans 226-405 (LVQKEKESPG…AIWYWSLLTS (180 aa)). Phosphoserine is present on residues Ser-240, Ser-1475, Ser-1488, and Ser-1509. The tract at residues 1446–1531 (TADETSHLQP…PTRRPPFTRG (86 aa)) is disordered. A compositionally biased stretch (polar residues) spans 1485–1502 (GDQSPGLGTQPKLPSSSG). Thr-1512 is modified (phosphothreonine). Positions 1516-1531 (PLSPSTPTRRPPFTRG) are enriched in low complexity. Phosphoserine is present on Ser-1518. Phosphothreonine occurs at positions 1521 and 1523. Phosphoserine is present on residues Ser-1537 and Ser-1540. 2 consecutive ZZ-type zinc fingers follow at residues 1778 to 1833 (NVDI…FTCD) and 1827 to 1882 (NMEF…MVTI). The Zn(2+) site is built by Cys-1783, Cys-1786, Cys-1797, Cys-1800, Cys-1806, Cys-1809, His-1819, His-1823, Cys-1832, Cys-1835, Cys-1846, Cys-1849, Cys-1855, Cys-1858, His-1868, and His-1872. 2 disordered regions span residues 1994–2078 (AVQG…PSPE) and 2426–2455 (LELDERGDREEEVERPVSSPGDPEQKKLDP). A compositionally biased stretch (basic and acidic residues) spans 2009-2027 (AVHEEIRPVDFKQRNKADK). The span at 2033–2043 (KDPSCQTQISD) shows a compositional bias: polar residues. A compositionally biased stretch (basic and acidic residues) spans 2426–2440 (LELDERGDREEEVER). Ser-2444 is subject to Phosphoserine. An N6-acetyllysine modification is found at Lys-2667.

Interacts with KLF6 and KLF9. Interacts via (ZZ-type 2 zinc finger) with histone H3 trimethylated at 'Lys-4' (H3K4me3) and histone H3 acetylated at 'Lys-4' (H3K4ac). As to expression, expressed at low levels in cerebellum.

Histone H3 reader which may act as a transcriptional coactivator for KLF6 and KLF9 transcription factors. The polypeptide is Zinc finger ZZ-type and EF-hand domain-containing protein 1 (Homo sapiens (Human)).